The primary structure comprises 93 residues: YcgL domain-containing protein VSAL_I1068 (93 aa).

The YcgL domain occupies 1–84 (MYCSIYKSSK…PPENLLEKYK (84 aa)).

This chain is YcgL domain-containing protein VSAL_I1068, found in Aliivibrio salmonicida (strain LFI1238) (Vibrio salmonicida (strain LFI1238)).